Consider the following 453-residue polypeptide: Ribosomal protein uS12 methylthiotransferase RimO (453 aa).

The region spanning 5–120 (PKVGFVSLGC…VMQAVHSHLP (116 aa)) is the MTTase N-terminal domain. 6 residues coordinate [4Fe-4S] cluster: cysteine 14, cysteine 50, cysteine 79, cysteine 151, cysteine 155, and cysteine 158. The Radical SAM core domain maps to 137 to 382 (LTPRHYAYLK…MEVAEEVSAN (246 aa)). The region spanning 385 to 453 (QRKVGKTLKV…ADGHDLWGEV (69 aa)) is the TRAM domain.

It belongs to the methylthiotransferase family. RimO subfamily. [4Fe-4S] cluster serves as cofactor.

It is found in the cytoplasm. It carries out the reaction L-aspartate(89)-[ribosomal protein uS12]-hydrogen + (sulfur carrier)-SH + AH2 + 2 S-adenosyl-L-methionine = 3-methylsulfanyl-L-aspartate(89)-[ribosomal protein uS12]-hydrogen + (sulfur carrier)-H + 5'-deoxyadenosine + L-methionine + A + S-adenosyl-L-homocysteine + 2 H(+). Catalyzes the methylthiolation of an aspartic acid residue of ribosomal protein uS12. The protein is Ribosomal protein uS12 methylthiotransferase RimO of Burkholderia lata (strain ATCC 17760 / DSM 23089 / LMG 22485 / NCIMB 9086 / R18194 / 383).